The following is a 679-amino-acid chain: UvrABC system protein C (679 aa).

Residues 65-143 (NSPGVYRMLN…IKRLRPRFNV (79 aa)) form the GIY-YIG domain. Residues 253 to 288 (QKVKSHMAEAMNQAAEDLDFERAAIYRDRLAALSHV) enclose the UVR domain.

This sequence belongs to the UvrC family. As to quaternary structure, interacts with UvrB in an incision complex.

The protein resides in the cytoplasm. Its function is as follows. The UvrABC repair system catalyzes the recognition and processing of DNA lesions. UvrC both incises the 5' and 3' sides of the lesion. The N-terminal half is responsible for the 3' incision and the C-terminal half is responsible for the 5' incision. The chain is UvrABC system protein C from Rhizobium etli (strain ATCC 51251 / DSM 11541 / JCM 21823 / NBRC 15573 / CFN 42).